We begin with the raw amino-acid sequence, 460 residues long: Homocitrate synthase (460 aa).

A Pyruvate carboxyltransferase domain is found at 3–258 (VGILDSTLRE…IEVVKLNKLQ (256 aa)). Position 11 (R11) interacts with 2-oxoglutarate. Residue E12 coordinates Mg(2+). 2-oxoglutarate contacts are provided by H75, R135, and T169. Mg(2+) contacts are provided by H197 and H199. The active-site Proton acceptor is H291.

This sequence belongs to the alpha-IPM synthase/homocitrate synthase family. Homocitrate synthase LYS20/LYS21 subfamily. Forms a homotetramer in the absence of lysine, and is in hexadecamer-octamer equilibrium in the presence of lysine. Mg(2+) is required as a cofactor. Requires Mn(2+) as cofactor.

The enzyme catalyses acetyl-CoA + 2-oxoglutarate + H2O = (2R)-homocitrate + CoA + H(+). It participates in amino-acid biosynthesis; L-lysine biosynthesis via AAA pathway; L-alpha-aminoadipate from 2-oxoglutarate: step 1/5. Inhibited by lysine. Catalyzes the aldol-type condensation of 2-oxoglutarate with acetyl-CoA to yield homocitrate. Carries out the first step of the alpha-aminoadipate (AAA) lysine biosynthesis pathway. This is Homocitrate synthase from Sulfurisphaera tokodaii (strain DSM 16993 / JCM 10545 / NBRC 100140 / 7) (Sulfolobus tokodaii).